Reading from the N-terminus, the 156-residue chain is RNA pyrophosphohydrolase (156 aa).

The Nudix hydrolase domain occupies 6 to 148 (NYRPNVAAIV…KKNIYVKVIK (143 aa)). Positions 43–64 (GGIDKGESAKNALFRELKEEIG) match the Nudix box motif.

This sequence belongs to the Nudix hydrolase family. RppH subfamily. A divalent metal cation is required as a cofactor.

In terms of biological role, accelerates the degradation of transcripts by removing pyrophosphate from the 5'-end of triphosphorylated RNA, leading to a more labile monophosphorylated state that can stimulate subsequent ribonuclease cleavage. The chain is RNA pyrophosphohydrolase from Campylobacter jejuni subsp. doylei (strain ATCC BAA-1458 / RM4099 / 269.97).